We begin with the raw amino-acid sequence, 240 residues long: Probable transcriptional regulatory protein Csal_0810 (240 aa).

This sequence belongs to the TACO1 family.

Its subcellular location is the cytoplasm. The protein is Probable transcriptional regulatory protein Csal_0810 of Chromohalobacter salexigens (strain ATCC BAA-138 / DSM 3043 / CIP 106854 / NCIMB 13768 / 1H11).